The chain runs to 189 residues: 3-isopropylmalate dehydratase small subunit (189 aa).

Belongs to the LeuD family. LeuD type 1 subfamily. In terms of assembly, heterodimer of LeuC and LeuD.

The enzyme catalyses (2R,3S)-3-isopropylmalate = (2S)-2-isopropylmalate. Its pathway is amino-acid biosynthesis; L-leucine biosynthesis; L-leucine from 3-methyl-2-oxobutanoate: step 2/4. In terms of biological role, catalyzes the isomerization between 2-isopropylmalate and 3-isopropylmalate, via the formation of 2-isopropylmaleate. The chain is 3-isopropylmalate dehydratase small subunit from Francisella philomiragia subsp. philomiragia (strain ATCC 25017 / CCUG 19701 / FSC 153 / O#319-036).